A 287-amino-acid polypeptide reads, in one-letter code: Large ribosomal subunit protein uL2 (287 aa).

A disordered region spans residues Arg-221 to Ser-287. Residues Lys-258–Ser-287 show a composition bias toward basic residues.

This sequence belongs to the universal ribosomal protein uL2 family. Part of the 50S ribosomal subunit. Forms a bridge to the 30S subunit in the 70S ribosome.

In terms of biological role, one of the primary rRNA binding proteins. Required for association of the 30S and 50S subunits to form the 70S ribosome, for tRNA binding and peptide bond formation. It has been suggested to have peptidyltransferase activity; this is somewhat controversial. Makes several contacts with the 16S rRNA in the 70S ribosome. The polypeptide is Large ribosomal subunit protein uL2 (Synechococcus sp. (strain WH7803)).